The chain runs to 465 residues: Exoenzymes regulatory protein AepA (465 aa).

A signal peptide spans 1–21; sequence MKFNVKMLSVTLGLFTSHAFA.

It belongs to the metallo-dependent hydrolases superfamily.

In terms of biological role, involved in the control of extracellular enzymes production. Stimulates PEL, PEH, CEL, and PRT production. This chain is Exoenzymes regulatory protein AepA (aepA), found in Pectobacterium carotovorum subsp. carotovorum (Erwinia carotovora subsp. carotovora).